Here is a 277-residue protein sequence, read N- to C-terminus: Urease accessory protein UreD (277 aa).

This sequence belongs to the UreD family. UreD, UreF and UreG form a complex that acts as a GTP-hydrolysis-dependent molecular chaperone, activating the urease apoprotein by helping to assemble the nickel containing metallocenter of UreC. The UreE protein probably delivers the nickel.

It localises to the cytoplasm. In terms of biological role, required for maturation of urease via the functional incorporation of the urease nickel metallocenter. The protein is Urease accessory protein UreD of Flavobacterium johnsoniae (strain ATCC 17061 / DSM 2064 / JCM 8514 / BCRC 14874 / CCUG 350202 / NBRC 14942 / NCIMB 11054 / UW101) (Cytophaga johnsonae).